The chain runs to 314 residues: MXKKNFIPSVSLVRRDLPTLVTTTTSSTALSKPTSSVVSETSSKSLPSLTSSAFSTSSGXTSSSSLIVASITPPSTVGNPFILNAADKPNGTVYIAVGAVIGAIFISILIWWLVSXYLSRRFTMTNSYANDSKNLYRGHHKHSSSLQSNPFDINDEKSYMQDDWDSMSQLESSQYEDAASPFNPIQDPFTDNRRSLFISPTLQVSQYEKSHSRHQSKDTNIFIDDPSLYVGTYLEEEEEEERKLNLNRPQRAASPERKEKKINSMEGYHKRNQSSLGLIPVASATSNTSSPKKAHKRQAPSMFLDDVLNGREII.

The segment at 32–59 (KPTSSVVSETSSKSLPSLTSSAFSTSSG) is disordered. The chain crosses the membrane as a helical span at residues 93–113 (VYIAVGAVIGAIFISILIWWL). A phosphoserine mark is found at Ser-148, Ser-254, and Ser-274. Residues 240–309 (EERKLNLNRP…PSMFLDDVLN (70 aa)) form a disordered region. The segment covering 254–269 (SPERKEKKINSMEGYH) has biased composition (basic and acidic residues).

Belongs to the PRM5 family.

The protein resides in the vacuole membrane. This is Vacuolar membrane protein FOSTERSO_4058 from Saccharomyces cerevisiae (strain FostersO) (Baker's yeast).